The following is a 520-amino-acid chain: Ribonuclease Y (520 aa).

Residues Met1 to Ala21 traverse the membrane as a helical segment. The KH domain maps to Cys210–Ile295. In terms of domain architecture, HD spans Leu336–Ala429.

Belongs to the RNase Y family.

It is found in the cell membrane. Endoribonuclease that initiates mRNA decay. In Christiangramia forsetii (strain DSM 17595 / CGMCC 1.15422 / KT0803) (Gramella forsetii), this protein is Ribonuclease Y.